The primary structure comprises 95 residues: Co-chaperonin GroES (95 aa).

It belongs to the GroES chaperonin family. As to quaternary structure, heptamer of 7 subunits arranged in a ring. Interacts with the chaperonin GroEL.

Its subcellular location is the cytoplasm. Its function is as follows. Together with the chaperonin GroEL, plays an essential role in assisting protein folding. The GroEL-GroES system forms a nano-cage that allows encapsulation of the non-native substrate proteins and provides a physical environment optimized to promote and accelerate protein folding. GroES binds to the apical surface of the GroEL ring, thereby capping the opening of the GroEL channel. This is Co-chaperonin GroES from Streptococcus mutans serotype c (strain ATCC 700610 / UA159).